The following is an 85-amino-acid chain: Protein MANBAL (85 aa).

Residues 24-44 (YGLFLGAIFQLICVLAIIVPI) traverse the membrane as a helical segment. A compositionally biased stretch (basic and acidic residues) spans 49-64 (EAEAEQAEPRSAEGPK). Residues 49–85 (EAEAEQAEPRSAEGPKKPKAAIASTNKRPKKETKKKR) are disordered. A compositionally biased stretch (basic residues) spans 75-85 (KRPKKETKKKR).

This sequence belongs to the UPF0239 family.

It is found in the membrane. The polypeptide is Protein MANBAL (Manbal) (Mus musculus (Mouse)).